The chain runs to 328 residues: Dolichyl-diphosphooligosaccharide--protein glycosyltransferase subunit MAGT1 (328 aa).

A signal peptide spans 1-22 (MLHKLLIVVFLVVCLHDMRLNG). The Extracellular portion of the chain corresponds to 23-177 (QKKKETLLSE…DVHIRVIRPP (155 aa)). One can recognise a Thioredoxin domain in the interval 40-168 (WVSKRAVVRL…LARWVADRTD (129 aa)). N-linked (GlcNAc...) asparagine glycosylation occurs at asparagine 64. An intrachain disulfide couples cysteine 80 to cysteine 83. The helical transmembrane segment at 178–198 (NYAGPLMLGLLLAFIGSLAYL) threads the bilayer. Over 199-202 (RRNN) the chain is Cytoplasmic. The helical transmembrane segment at 203-223 (LEFLFNKNVWAFSALCFVLIM) threads the bilayer. Residues 224–257 (TSGQMWNHIRGPPYAHKNPNTGQVSYIHGSSQAQ) are Extracellular-facing. A helical transmembrane segment spans residues 258 to 278 (FVAETHIVLLFNAAVTIGMVL). The Cytoplasmic segment spans residues 279–293 (LHEAATSGLDIVKRK). Residues 294-314 (IMCVAGIGLVVLFFSWLLSVF) traverse the membrane as a helical segment. Residues 315 to 328 (RAKYHGYPYSFLFG) lie on the Extracellular side of the membrane.

It belongs to the OST3/OST6 family. Accessory component of the STT3B-containing form of the oligosaccharyltransferase (OST) complex.

The protein localises to the cell membrane. The protein resides in the endoplasmic reticulum. Its subcellular location is the endoplasmic reticulum membrane. It participates in protein modification; protein glycosylation. In terms of biological role, accessory component of the STT3B-containing form of the N-oligosaccharyl transferase (OST) complex which catalyzes the transfer of a high mannose oligosaccharide from a lipid-linked oligosaccharide donor to an asparagine residue within an Asn-X-Ser/Thr consensus motif in nascent polypeptide chains. Involved in N-glycosylation of STT3B-dependent substrates. Specifically required for the glycosylation of a subset of acceptor sites that are near cysteine residues; in this function seems to act redundantly with TUSC3. In its oxidized form proposed to form transient mixed disulfides with a glycoprotein substrate to facilitate access of STT3B to the unmodified acceptor site. Also has oxidoreductase-independent functions in the STT3B-containing OST complex possibly involving substrate recognition. Could indirectly play a role in Mg(2+) transport. In Danio rerio (Zebrafish), this protein is Dolichyl-diphosphooligosaccharide--protein glycosyltransferase subunit MAGT1.